Here is a 90-residue protein sequence, read N- to C-terminus: UPF0237 protein MJ1558 (90 aa).

An ACT domain is found at 5 to 79 (VVSVIGQDRT…EELGVQVIVQ (75 aa)).

This sequence belongs to the UPF0237 family.

The polypeptide is UPF0237 protein MJ1558 (Methanocaldococcus jannaschii (strain ATCC 43067 / DSM 2661 / JAL-1 / JCM 10045 / NBRC 100440) (Methanococcus jannaschii)).